The sequence spans 115 residues: Large ribosomal subunit protein bL19 (115 aa).

The protein belongs to the bacterial ribosomal protein bL19 family.

Functionally, this protein is located at the 30S-50S ribosomal subunit interface and may play a role in the structure and function of the aminoacyl-tRNA binding site. The polypeptide is Large ribosomal subunit protein bL19 (Oleidesulfovibrio alaskensis (strain ATCC BAA-1058 / DSM 17464 / G20) (Desulfovibrio alaskensis)).